Consider the following 530-residue polypeptide: UDP-glucuronosyltransferase 2B15 (530 aa).

The N-terminal stretch at 1–23 (MSGKWISALLLLQISFCFKSGNC) is a signal peptide. Asn-316 carries N-linked (GlcNAc...) asparagine glycosylation. A helical membrane pass occupies residues 494 to 510 (VIGFLLSCVAVTVVLAL).

The protein belongs to the UDP-glycosyltransferase family. N-glycosylated. Liver. Lower levels seen in the kidney and testis.

It is found in the endoplasmic reticulum membrane. It carries out the reaction glucuronate acceptor + UDP-alpha-D-glucuronate = acceptor beta-D-glucuronoside + UDP + H(+). The catalysed reaction is 17alpha-estradiol + UDP-alpha-D-glucuronate = 17alpha-estradiol 3-O-(beta-D-glucuronate) + UDP + H(+). The enzyme catalyses 16alpha,17alpha-estriol + UDP-alpha-D-glucuronate = 16alpha,17alpha-estriol 3-O-(beta-D-glucuronate) + UDP + H(+). It catalyses the reaction 17beta-hydroxy-5alpha-androstan-3-one + UDP-alpha-D-glucuronate = 5alpha-dihydrotestosterone 17-O-(beta-D-glucuronate) + UDP + H(+). Functionally, UDP-glucuronosyltransferase (UGT) that catalyzes phase II biotransformation reactions in which lipophilic substrates are conjugated with glucuronic acid to increase the metabolite's water solubility, thereby facilitating excretion into either the urine or bile. Essential for the elimination and detoxification of drugs, xenobiotics and endogenous compounds. Catalyzes the glucuronidation of endogenous steroid hormones such as androgens (testosterone, androsterone) and estrogens (estradiol, epiestradiol, estriol, catechol estrogens). Displays glucuronidation activity toward several classes of xenoblotic substrates, including phenolic compounds (eugenol, 4-nitrophenol, 4-hydroxybiphenyl) and phenylpropanoids (naringenin, coumarins). Catalyzes the glucuronidation of monoterpenoid alcohols such as borneol, menthol and isomenthol, a class of natural compounds used in essential oils. This Rattus norvegicus (Rat) protein is UDP-glucuronosyltransferase 2B15.